A 180-amino-acid polypeptide reads, in one-letter code: Inner membrane assembly complex subunit 17 (180 aa).

Residues 1–36 (MMIRNQLYRKCIIGGGRSILNGWVINGTVPNIGLRY) constitute a mitochondrion transit peptide. Topologically, residues 37 to 105 (LRSGIVTRSN…RKTQDIPIKR (69 aa)) are mitochondrial matrix. A helical membrane pass occupies residues 106–128 (FIRPTWMFLLMSSTFYLLGHYIW). A coiled-coil region spans residues 129-163 (WKLEYDEVEKELDRQVTALEEELHNLIEEHRVHGE). Residues 129–180 (WKLEYDEVEKELDRQVTALEEELHNLIEEHRVHGENEAIKNKKHKHWYKFWS) are Mitochondrial intermembrane-facing.

It belongs to the INA17 family. Component of the inner membrane assembly (INA) complex, composed of INA17 and INA22. Interacts with a subset of F(1)F(0)-ATP synthase subunits of the F(1)-domain and the peripheral stalk.

It is found in the mitochondrion inner membrane. Its function is as follows. Component of the INA complex (INAC) that promotes the biogenesis of mitochondrial F(1)F(0)-ATP synthase. INAC facilitates the assembly of the peripheral stalk and promotes the assembly of the catalytic F(1)-domain with the membrane-embedded F(0)-domain. This chain is Inner membrane assembly complex subunit 17, found in Vanderwaltozyma polyspora (strain ATCC 22028 / DSM 70294 / BCRC 21397 / CBS 2163 / NBRC 10782 / NRRL Y-8283 / UCD 57-17) (Kluyveromyces polysporus).